Consider the following 307-residue polypeptide: Ribosomal protein L11 methyltransferase (307 aa).

S-adenosyl-L-methionine is bound by residues threonine 162, glycine 183, aspartate 205, and asparagine 244.

It belongs to the methyltransferase superfamily. PrmA family.

Its subcellular location is the cytoplasm. The enzyme catalyses L-lysyl-[protein] + 3 S-adenosyl-L-methionine = N(6),N(6),N(6)-trimethyl-L-lysyl-[protein] + 3 S-adenosyl-L-homocysteine + 3 H(+). Methylates ribosomal protein L11. The chain is Ribosomal protein L11 methyltransferase from Bordetella bronchiseptica (strain ATCC BAA-588 / NCTC 13252 / RB50) (Alcaligenes bronchisepticus).